Consider the following 105-residue polypeptide: Large ribosomal subunit protein bL21c (105 aa).

This sequence belongs to the bacterial ribosomal protein bL21 family. In terms of assembly, part of the 50S ribosomal subunit.

Its subcellular location is the plastid. The protein localises to the chloroplast. Its function is as follows. This protein binds to 23S rRNA. The sequence is that of Large ribosomal subunit protein bL21c from Phaeodactylum tricornutum (strain CCAP 1055/1).